The sequence spans 456 residues: Septin-10 (456 aa).

In terms of domain architecture, Septin-type G spans 40–306; sequence QGFCFNILCV…ELYRRCKLQE (267 aa). Residues 50 to 57 form a G1 motif region; that stretch reads GETGIGKS. GTP contacts are provided by residues 50-57, glycine 105, 186-194, glycine 240, and arginine 255; these read GETGIGKS and KADTISKSE. A G3 motif region spans residues 102-105; it reads NTVG. The interval 185 to 188 is G4 motif; sequence AKAD. Serine 418 is modified (phosphoserine).

Belongs to the TRAFAC class TrmE-Era-EngA-EngB-Septin-like GTPase superfamily. Septin GTPase family. In terms of assembly, septins polymerize into heterooligomeric protein complexes that form filaments, and can associate with cellular membranes, actin filaments and microtubules. GTPase activity is required for filament formation. Interacts with ADGB. Post-translationally, proteolytically cleaved in vitro in a calmodulin-dependent manner.

The protein localises to the cytoplasm. It localises to the cytoskeleton. Its subcellular location is the cell projection. It is found in the cilium. The protein resides in the flagellum. Functionally, filament-forming cytoskeletal GTPase. May play a role in cytokinesis (Potential). The protein is Septin-10 of Rattus norvegicus (Rat).